A 92-amino-acid chain; its full sequence is SPbeta prophage-derived uncharacterized protein YoqM (92 aa).

The first 25 residues, 1–25 (MKLRKVLTGSVLSLGLLVSASPAFA), serve as a signal peptide directing secretion.

This Bacillus subtilis (strain 168) protein is SPbeta prophage-derived uncharacterized protein YoqM (yoqM).